A 269-amino-acid polypeptide reads, in one-letter code: JmjC domain-containing protein 8 (269 aa).

An N-terminal signal peptide occupies residues 1–24 (MAAAGRFGLLLLIVLWTMVTVVLP). Residues asparagine 135, asparagine 145, and asparagine 214 are each glycosylated (N-linked (GlcNAc...) asparagine). A JmjC domain is found at 147–269 (TEWAPLFQHY…TSVFISTFLG (123 aa)).

As to quaternary structure, oligomer. Dimer. Interacts with PKM; regulates angiogenesis and metabolism. In terms of processing, N-glycosylated.

The protein resides in the endoplasmic reticulum lumen. The protein localises to the cytoplasm. In terms of biological role, functions as a positive regulator of TNF-induced NF-kappaB signaling. Regulates angiogenesis and cellular metabolism through interaction with PKM. The protein is JmjC domain-containing protein 8 of Rattus norvegicus (Rat).